Here is a 228-residue protein sequence, read N- to C-terminus: 2-C-methyl-D-erythritol 4-phosphate cytidylyltransferase (228 aa).

This sequence belongs to the IspD/TarI cytidylyltransferase family. IspD subfamily.

It catalyses the reaction 2-C-methyl-D-erythritol 4-phosphate + CTP + H(+) = 4-CDP-2-C-methyl-D-erythritol + diphosphate. Its pathway is isoprenoid biosynthesis; isopentenyl diphosphate biosynthesis via DXP pathway; isopentenyl diphosphate from 1-deoxy-D-xylulose 5-phosphate: step 2/6. Its function is as follows. Catalyzes the formation of 4-diphosphocytidyl-2-C-methyl-D-erythritol from CTP and 2-C-methyl-D-erythritol 4-phosphate (MEP). The polypeptide is 2-C-methyl-D-erythritol 4-phosphate cytidylyltransferase (Mannheimia succiniciproducens (strain KCTC 0769BP / MBEL55E)).